A 391-amino-acid chain; its full sequence is Probable malate dehydrogenase 1 (391 aa).

Residue 68 to 74 (GAAGQIA) coordinates NAD(+). The substrate site is built by Arg-149 and Arg-155. NAD(+) is bound by residues Asn-162, Gln-169, and 186–188 (VGN). Positions 188 and 219 each coordinate substrate. His-244 serves as the catalytic Proton acceptor.

It belongs to the LDH/MDH superfamily. MDH type 2 family. As to quaternary structure, homodimer.

It carries out the reaction (S)-malate + NAD(+) = oxaloacetate + NADH + H(+). In terms of biological role, catalyzes the reversible oxidation of malate to oxaloacetate. The protein is Probable malate dehydrogenase 1 (mdhA) of Dictyostelium discoideum (Social amoeba).